The chain runs to 164 residues: Interferon gamma (164 aa).

The first 19 residues, Met-1–Gly-19, serve as a signal peptide directing secretion. N-linked (GlcNAc...) asparagine glycosylation is found at Asn-42 and Asn-61.

It belongs to the type II (or gamma) interferon family. Homodimer.

Its subcellular location is the secreted. In terms of biological role, produced by lymphocytes activated by specific antigens or mitogens. IFN-gamma, in addition to having antiviral activity, has important immunoregulatory functions. It is a potent activator of macrophages, it has antiproliferative effects on transformed cells and it can potentiate the antiviral and antitumor effects of the type I interferons. This Meleagris gallopavo (Wild turkey) protein is Interferon gamma (IFNG).